The primary structure comprises 813 residues: MVALLLFPMLLQLLSPTCAQTQKNITLGSTLAPQGPASSWLSPSGDFAFGFRPVEGNTSFYLIAVWFNKISDKTVVWYAKNTDQDPSIVEVPSDSFLQLTNDGALSLKDRSGQEGWNPQVTGVAYASMRDTGNFVLLGADGTTKWQTFDMPSDTILPTQVIPCNKTRNKSLRARLDIDDYSSGRFLLDVQTDGNLALYLVAVPSGSKYQQYWSTDTTGNGSELVFSETGKVYFALTDGTQINISSDAGIGSMADYFHRATLDPDGVFRQYVYPKKANAGILGGETWTALSMQPQNICHAIVSDVGSGVCGFNSYCTFDGTRNQIASCQCPPWYKFFDEQKKYKGCKQDFQPHSCDLEEATALAQFELRPIYGVDWPLSDYEKYEPIGQDDCGRLCVIECFCAMAVYNQSTSTCWKKKLPLSNGNMADYVQRTVLLKVPSSNSSQFMISTSSNKWKRNRKHWVLGSSLILGTSILVNFALISIFLFGTYCRITTKKNIPLSQASSKSQLPLKTFTYKELEKATAGFHEILGAGASGVVYKGQLEDELKTNIAVKTIHKLQPETEKEFMVEVETIGQTFHKNLVRLLGFCNERAERLLVYEFMTNGPLNRLLFDNSRPHWNTRVHIALGVARGFLYLHDECSKQIIHCDIKPQNILLDDNLVAKISDFGLAKLLLTNQTRTKTGIRGTRGYVAPEWFKNIGISTKVDVYSFGVILLELVCCRRNVELEVVDEEQTIVTYWANDCYRSGRIDLLVEGDDEAIYDIKKVERFVTVALWCLQEDPSMRPNMLKVTQMLDGAVAIPSPPDPCSFISSLP.

Residues 1 to 19 (MVALLLFPMLLQLLSPTCA) form the signal peptide. At 20–466 (QTQKNITLGS…NRKHWVLGSS (447 aa)) the chain is on the extracellular side. Positions 22-149 (QKNITLGSTL…DGTTKWQTFD (128 aa)) constitute a Bulb-type lectin domain. Asn-24, Asn-57, Asn-164, Asn-168, Asn-219, and Asn-242 each carry an N-linked (GlcNAc...) asparagine glycan. The 54-residue stretch at 293–346 (PQNICHAIVSDVGSGVCGFNSYCTFDGTRNQIASCQCPPWYKFFDEQKKYKGCK) folds into the EGF-like; atypical domain. 5 cysteine pairs are disulfide-bonded: Cys-297-Cys-315, Cys-309-Cys-327, Cys-329-Cys-345, Cys-391-Cys-413, and Cys-395-Cys-401. The 80-residue stretch at 354-433 (CDLEEATALA…NMADYVQRTV (80 aa)) folds into the PAN domain. N-linked (GlcNAc...) asparagine glycans are attached at residues Asn-407 and Asn-441. A helical transmembrane segment spans residues 467 to 487 (LILGTSILVNFALISIFLFGT). Residues 488 to 813 (YCRITTKKNI…DPCSFISSLP (326 aa)) lie on the Cytoplasmic side of the membrane. Residues 523 to 797 (AGFHEILGAG…KVTQMLDGAV (275 aa)) enclose the Protein kinase domain. ATP is bound by residues 529-537 (LGAGASGVV) and Lys-553. Catalysis depends on Asp-647, which acts as the Proton acceptor.

This sequence belongs to the protein kinase superfamily. Ser/Thr protein kinase family. In terms of assembly, interacts (via kinase domain) with ADF4. As to expression, expressed in plumules, radicles and panicles.

It is found in the membrane. It carries out the reaction L-seryl-[protein] + ATP = O-phospho-L-seryl-[protein] + ADP + H(+). The catalysed reaction is L-threonyl-[protein] + ATP = O-phospho-L-threonyl-[protein] + ADP + H(+). Involved in innate immunity. Required for the expression of defense-related genes PR1A, LOX2 and CHS1 upon biotic stresses. Required for basal resistance to the fungal blast (M.grisea), bacterial blight (O.oryzae pv. oryzae, Xoo) and the herbivorous insect brown planthopper (N.lugens, BPH). May be involved in several defense signaling pathways. Involved in the promotion of seed germination. Required for the expression of alpha-amylase genes during seed germination. Involved in resistance against the brown planthopper (BPH). Member of the BPH3 (BPH resistance locus 3) cluster which contains LECRK1, LECRK2 and LECRK3. The chain is G-type lectin S-receptor-like serine/threonine-protein kinase LECRK1 from Oryza sativa subsp. indica (Rice).